Reading from the N-terminus, the 381-residue chain is Queuine tRNA-ribosyltransferase (381 aa).

D92 functions as the Proton acceptor in the catalytic mechanism. Substrate-binding positions include 92–96 (DSGGF), D146, Q190, and G217. The interval 248-254 (GVGRPED) is RNA binding. The active-site Nucleophile is the D267. The interval 272–276 (TRNAR) is RNA binding; important for wobble base 34 recognition. Zn(2+) contacts are provided by C305, C307, C310, and H337.

Belongs to the queuine tRNA-ribosyltransferase family. Homodimer. Within each dimer, one monomer is responsible for RNA recognition and catalysis, while the other monomer binds to the replacement base PreQ1. Zn(2+) is required as a cofactor.

The enzyme catalyses 7-aminomethyl-7-carbaguanine + guanosine(34) in tRNA = 7-aminomethyl-7-carbaguanosine(34) in tRNA + guanine. It participates in tRNA modification; tRNA-queuosine biosynthesis. Functionally, catalyzes the base-exchange of a guanine (G) residue with the queuine precursor 7-aminomethyl-7-deazaguanine (PreQ1) at position 34 (anticodon wobble position) in tRNAs with GU(N) anticodons (tRNA-Asp, -Asn, -His and -Tyr). Catalysis occurs through a double-displacement mechanism. The nucleophile active site attacks the C1' of nucleotide 34 to detach the guanine base from the RNA, forming a covalent enzyme-RNA intermediate. The proton acceptor active site deprotonates the incoming PreQ1, allowing a nucleophilic attack on the C1' of the ribose to form the product. After dissociation, two additional enzymatic reactions on the tRNA convert PreQ1 to queuine (Q), resulting in the hypermodified nucleoside queuosine (7-(((4,5-cis-dihydroxy-2-cyclopenten-1-yl)amino)methyl)-7-deazaguanosine). The chain is Queuine tRNA-ribosyltransferase from Xanthomonas axonopodis pv. citri (strain 306).